Here is a 505-residue protein sequence, read N- to C-terminus: Bile acid-sensitive ion channel (505 aa).

The tract at residues 1 to 30 is binds the plasma membrane and stabilizes the channel in the closed state; sequence MEQTEKSKVYAENGLLEKIKLCLSKKPLPS. Residues 1-61 are Cytoplasmic-facing; the sequence is MEQTEKSKVY…NIVQNRSKIR (61 aa). The chain crosses the membrane as a helical span at residues 62–82; that stretch reads RVLWLVVVLGSVSLVTWQIYI. Topologically, residues 83-459 are extracellular; that stretch reads RLLNYFTWPT…GLFCGASLIT (377 aa). 6 cysteine pairs are disulfide-bonded: Cys112–Cys207, Cys185–Cys192, Cys298–Cys377, Cys315–Cys373, Cys328–Cys350, and Cys330–Cys342. Asn147, Asn163, Asn178, and Asn179 each carry an N-linked (GlcNAc...) asparagine glycan. The N-linked (GlcNAc...) asparagine glycan is linked to Asn306. N-linked (GlcNAc...) asparagine glycosylation is found at Asn370, Asn405, and Asn421. A GAS motif; ion selectivity filter motif is present at residues 454–456; sequence GAS. A helical membrane pass occupies residues 460–480; sequence IIEIIEYLFTNFYWICIFFLL. Over 481–505 the chain is Cytoplasmic; sequence KISEMTQWTPPPQNHLGNKNRIEEC.

This sequence belongs to the amiloride-sensitive sodium channel (TC 1.A.6) family. ASIC5 subfamily. In terms of assembly, forms homotrimeric channels. Detected in small intestine, duodenum and jejunum. Detected at very low levels in testis and rectum.

Its subcellular location is the apical cell membrane. It localises to the cell membrane. It catalyses the reaction Na(+)(in) = Na(+)(out). The catalysed reaction is Li(+)(in) = Li(+)(out). The enzyme catalyses K(+)(in) = K(+)(out). It carries out the reaction H(+)(in) = H(+)(out). Inhibited by the diuretic drug amiloride. Its function is as follows. Forms bile acid-gated sodium channels and may play a role in bile acid-dependent absorption and secretion by epithelial cells of the bile ducts. Displays high selectivity for sodium ions but can also permit the permeation of other cations. The gating could be indirect and the consequence of alterations of the membrane environment of the channel by bile acids. As a sodium channel of type II unipolar brush cells of the vestibulocerebellum, controlling the electrical activity of these cells, could play a role in motor coordination and balance. The sequence is that of Bile acid-sensitive ion channel from Homo sapiens (Human).